The following is a 146-amino-acid chain: Hemoglobin subunit beta (146 aa).

At Val1 the chain carries N-acetylvaline. Positions 2–146 constitute a Globin domain; it reads HLSGGEKSAV…VAHALGHKYH (145 aa). Thr12 is subject to Phosphothreonine. At Lys59 the chain carries N6-acetyllysine. His63 contributes to the heme b binding site. Lys82 carries the post-translational modification N6-acetyllysine. His92 lines the heme b pocket. Cys93 is modified (S-nitrosocysteine). Residue Lys144 is modified to N6-acetyllysine.

Belongs to the globin family. As to quaternary structure, heterotetramer of two alpha chains and two beta chains. As to expression, red blood cells.

Functionally, involved in oxygen transport from the lung to the various peripheral tissues. In Ornithorhynchus anatinus (Duckbill platypus), this protein is Hemoglobin subunit beta (HBB).